We begin with the raw amino-acid sequence, 143 residues long: Large ribosomal subunit protein uL15 (143 aa).

The interval 1–52 is disordered; sequence MELNSIQPADGAKHYKRRVGRGIGSGLGKTSGRGHKGQKSRSGGFHKVGFEG. A compositionally biased stretch (gly residues) spans 21-31; it reads RGIGSGLGKTS.

It belongs to the universal ribosomal protein uL15 family. As to quaternary structure, part of the 50S ribosomal subunit.

In terms of biological role, binds to the 23S rRNA. In Janthinobacterium sp. (strain Marseille) (Minibacterium massiliensis), this protein is Large ribosomal subunit protein uL15.